Reading from the N-terminus, the 619-residue chain is DNA mismatch repair protein MutL (619 aa).

The segment covering 364–375 (EPASAREPAAPR) has biased composition (low complexity). The segment at 364-399 (EPASAREPAAPRYSTSSGATGGRQPAASWPHAQPGY) is disordered.

It belongs to the DNA mismatch repair MutL/HexB family.

In terms of biological role, this protein is involved in the repair of mismatches in DNA. It is required for dam-dependent methyl-directed DNA mismatch repair. May act as a 'molecular matchmaker', a protein that promotes the formation of a stable complex between two or more DNA-binding proteins in an ATP-dependent manner without itself being part of a final effector complex. The chain is DNA mismatch repair protein MutL from Citrobacter koseri (strain ATCC BAA-895 / CDC 4225-83 / SGSC4696).